The following is a 282-amino-acid chain: ATP synthase gamma chain (282 aa).

The protein belongs to the ATPase gamma chain family. F-type ATPases have 2 components, CF(1) - the catalytic core - and CF(0) - the membrane proton channel. CF(1) has five subunits: alpha(3), beta(3), gamma(1), delta(1), epsilon(1). CF(0) has three main subunits: a, b and c.

The protein resides in the cell membrane. In terms of biological role, produces ATP from ADP in the presence of a proton gradient across the membrane. The gamma chain is believed to be important in regulating ATPase activity and the flow of protons through the CF(0) complex. This Clostridium acetobutylicum (strain ATCC 824 / DSM 792 / JCM 1419 / IAM 19013 / LMG 5710 / NBRC 13948 / NRRL B-527 / VKM B-1787 / 2291 / W) protein is ATP synthase gamma chain.